The chain runs to 209 residues: Pyridoxine/pyridoxamine 5'-phosphate oxidase (209 aa).

Residues 7-10 and Lys64 each bind substrate; that span reads REDY. Residues 59 to 64, 74 to 75, Arg80, and Lys81 contribute to the FMN site; these read RIVLLK and FT. Substrate contacts are provided by Tyr121, Arg125, and Ser129. FMN contacts are provided by residues 138-139 and Trp182; that span reads QS. Residue 188-190 coordinates substrate; that stretch reads RLH. Arg192 is a binding site for FMN.

It belongs to the pyridoxamine 5'-phosphate oxidase family. As to quaternary structure, homodimer. FMN is required as a cofactor.

The enzyme catalyses pyridoxamine 5'-phosphate + O2 + H2O = pyridoxal 5'-phosphate + H2O2 + NH4(+). It carries out the reaction pyridoxine 5'-phosphate + O2 = pyridoxal 5'-phosphate + H2O2. It participates in cofactor metabolism; pyridoxal 5'-phosphate salvage; pyridoxal 5'-phosphate from pyridoxamine 5'-phosphate: step 1/1. The protein operates within cofactor metabolism; pyridoxal 5'-phosphate salvage; pyridoxal 5'-phosphate from pyridoxine 5'-phosphate: step 1/1. Its function is as follows. Catalyzes the oxidation of either pyridoxine 5'-phosphate (PNP) or pyridoxamine 5'-phosphate (PMP) into pyridoxal 5'-phosphate (PLP). This chain is Pyridoxine/pyridoxamine 5'-phosphate oxidase, found in Actinobacillus pleuropneumoniae serotype 3 (strain JL03).